A 230-amino-acid polypeptide reads, in one-letter code: Phosphoribosylformylglycinamidine synthase subunit PurQ (230 aa).

The region spanning 2 to 230 (KIAVTKFLGT…KGMIDYAKRI (229 aa)) is the Glutamine amidotransferase type-1 domain. Residue cysteine 85 is the Nucleophile of the active site. Active-site residues include histidine 202 and glutamate 204.

In terms of assembly, part of the FGAM synthase complex composed of 1 PurL, 1 PurQ and 2 PurS subunits.

The protein resides in the cytoplasm. The catalysed reaction is N(2)-formyl-N(1)-(5-phospho-beta-D-ribosyl)glycinamide + L-glutamine + ATP + H2O = 2-formamido-N(1)-(5-O-phospho-beta-D-ribosyl)acetamidine + L-glutamate + ADP + phosphate + H(+). It carries out the reaction L-glutamine + H2O = L-glutamate + NH4(+). It participates in purine metabolism; IMP biosynthesis via de novo pathway; 5-amino-1-(5-phospho-D-ribosyl)imidazole from N(2)-formyl-N(1)-(5-phospho-D-ribosyl)glycinamide: step 1/2. Its function is as follows. Part of the phosphoribosylformylglycinamidine synthase complex involved in the purines biosynthetic pathway. Catalyzes the ATP-dependent conversion of formylglycinamide ribonucleotide (FGAR) and glutamine to yield formylglycinamidine ribonucleotide (FGAM) and glutamate. The FGAM synthase complex is composed of three subunits. PurQ produces an ammonia molecule by converting glutamine to glutamate. PurL transfers the ammonia molecule to FGAR to form FGAM in an ATP-dependent manner. PurS interacts with PurQ and PurL and is thought to assist in the transfer of the ammonia molecule from PurQ to PurL. The polypeptide is Phosphoribosylformylglycinamidine synthase subunit PurQ (Methanocaldococcus jannaschii (strain ATCC 43067 / DSM 2661 / JAL-1 / JCM 10045 / NBRC 100440) (Methanococcus jannaschii)).